A 395-amino-acid polypeptide reads, in one-letter code: S-adenosylmethionine synthase (395 aa).

His15 provides a ligand contact to ATP. Asp17 contacts Mg(2+). Glu43 contributes to the K(+) binding site. An L-methionine-binding site is contributed by Gln99. Positions 99–109 are flexible loop; that stretch reads QSPDIAMGVNE. ATP contacts are provided by residues 174–176, 240–241, Asp249, 255–256, Ala272, and Lys276; these read DGK, RF, and RK. Asp249 contacts L-methionine. An L-methionine-binding site is contributed by Lys280.

The protein belongs to the AdoMet synthase family. As to quaternary structure, homotetramer; dimer of dimers. Mg(2+) serves as cofactor. It depends on K(+) as a cofactor.

The protein resides in the cytoplasm. It carries out the reaction L-methionine + ATP + H2O = S-adenosyl-L-methionine + phosphate + diphosphate. Its pathway is amino-acid biosynthesis; S-adenosyl-L-methionine biosynthesis; S-adenosyl-L-methionine from L-methionine: step 1/1. Catalyzes the formation of S-adenosylmethionine (AdoMet) from methionine and ATP. The overall synthetic reaction is composed of two sequential steps, AdoMet formation and the subsequent tripolyphosphate hydrolysis which occurs prior to release of AdoMet from the enzyme. The sequence is that of S-adenosylmethionine synthase from Moorella thermoacetica (strain ATCC 39073 / JCM 9320).